Here is a 260-residue protein sequence, read N- to C-terminus: Dynein regulatory complex subunit 6 (260 aa).

The segment covering 1-13 (MAPKKKGGGKKKK) has biased composition (basic residues). The tract at residues 1-43 (MAPKKKGGGKKKKKDDGAEPPHDGSWERAVESGTWEKPVTDLP) is disordered. A compositionally biased stretch (basic and acidic residues) spans 14–30 (KDDGAEPPHDGSWERAV).

The protein belongs to the DRC6 family. In terms of assembly, component of the nexin-dynein regulatory complex (N-DRC).

It is found in the cytoplasm. The protein localises to the cytoskeleton. The protein resides in the flagellum axoneme. Functionally, component of the nexin-dynein regulatory complex (N-DRC), a key regulator of ciliary/flagellar motility which maintains the alignment and integrity of the distal axoneme and regulates microtubule sliding in motile axonemes. The polypeptide is Dynein regulatory complex subunit 6 (Chlamydomonas reinhardtii (Chlamydomonas smithii)).